Consider the following 192-residue polypeptide: Elongation factor P (192 aa).

The protein belongs to the elongation factor P family.

It localises to the cytoplasm. Its pathway is protein biosynthesis; polypeptide chain elongation. Functionally, involved in peptide bond synthesis. Stimulates efficient translation and peptide-bond synthesis on native or reconstituted 70S ribosomes in vitro. Probably functions indirectly by altering the affinity of the ribosome for aminoacyl-tRNA, thus increasing their reactivity as acceptors for peptidyl transferase. The sequence is that of Elongation factor P from Borrelia hermsii (strain HS1 / DAH).